We begin with the raw amino-acid sequence, 501 residues long: MEVMQLSFSYPALFLFVFFLFMLVKQLRRPKNLPPGPNKLPIIGNLHQLATELPHHTLKQLADKYGPIMHLQFGEVSAIIVSSAKLAKVFLGNHGLAVADRPKTMVATIMLYNSSGVTFAPYGDYWKHLRQVYAVELLSPKSVRSFSMIMDEEISLMLKRIQSNAAGQPLKVHDEMMTYLFATLCRTSIGSVCKGRDLLIDTAKDISAISAAIRIEELFPSLKILPYITGLHRQLGKLSKRLDGILEDIIAQREKMQESSTGDNDERDILGVLLKLKRSNSNDTKVRIRNDDIKAIVFELILAGTLSTAATVEWCLSELKKNPGAMKKAQDEVRQVMKGETICTNDVQKLEYIRMVIKETFRMHPPAPLLFPRECREPIQVEGYTIPEKSWLIVNYWAVGRDPELWNDPEKFEPERFRNSPVDMSGNHYELIPFGAGRRICPGISFAATNAELLLASLIYHFDWKLPAGVKELDMDELFGAGCVRKNPLHLIPKTVVPCQD.

A helical; Signal-anchor for type II membrane protein membrane pass occupies residues 3 to 23 (VMQLSFSYPALFLFVFFLFML). Cysteine 441 serves as a coordination point for heme.

Belongs to the cytochrome P450 family. Heme serves as cofactor. As to expression, highly expressed in roots. Expressed at low levels in stems.

It localises to the endoplasmic reticulum membrane. The enzyme catalyses (19E)-geissoschizine + reduced [NADPH--hemoprotein reductase] + O2 = polyneuridine aldehyde + oxidized [NADPH--hemoprotein reductase] + 2 H2O + H(+). The catalysed reaction is tetrahydroalstonine + A + reduced [NADPH--hemoprotein reductase] + O2 = alstonine + AH2 + oxidized [NADPH--hemoprotein reductase] + 2 H2O + H(+). It catalyses the reaction ajmalicine + A + reduced [NADPH--hemoprotein reductase] + O2 = serpentine + AH2 + oxidized [NADPH--hemoprotein reductase] + 2 H2O + H(+). It functions in the pathway alkaloid biosynthesis; ajmaline biosynthesis. In terms of biological role, monooxygenase involved in the biosynthesis of ajmaline-type monoterpenoid indole alkaloids (MIAs) natural products, important plant-derived pharmaceuticals used in the therapy of heart disorders. Converts by cyclization the strictosidine-derived geissoschizine to the sarpagan alkaloid polyneuridine aldehyde, precursor of vomilenine, an intermediate chemical in the biosynthesis of ajmaline. Converts by aromatization the tetrahydro-beta-carboline alkaloids tetrahydroalstonine and ajmalicine to the corresponding beta-carboline alkaloids alstonine and serpentine, respectively. This chain is Sarpagan bridge enzyme, found in Gelsemium sempervirens (Carolina jasmine).